The primary structure comprises 113 residues: uncharacterized protein (113 aa).

Positions 1 to 38 are cleaved as a signal peptide; the sequence is MVKIERKATDSAYHEFTKILTSSAQLMAFLNQSDFVKA.

This is an uncharacterized protein from Haemophilus influenzae (strain ATCC 51907 / DSM 11121 / KW20 / Rd).